Reading from the N-terminus, the 139-residue chain is Small ribosomal subunit protein uS11 (139 aa).

The protein belongs to the universal ribosomal protein uS11 family. As to quaternary structure, part of the 30S ribosomal subunit.

In terms of biological role, located on the platform of the 30S subunit. This is Small ribosomal subunit protein uS11 from Pyrobaculum islandicum (strain DSM 4184 / JCM 9189 / GEO3).